We begin with the raw amino-acid sequence, 145 residues long: Small ribosomal subunit protein eS19 (145 aa).

Belongs to the eukaryotic ribosomal protein eS19 family. As to quaternary structure, component of the small ribosomal subunit.

Its subcellular location is the cytoplasm. It is found in the nucleus. Functionally, component of the small ribosomal subunit. The ribosome is a large ribonucleoprotein complex responsible for the synthesis of proteins in the cell. Required for pre-rRNA processing and maturation of 40S ribosomal subunits. This is Small ribosomal subunit protein eS19 (rps19) from Myxine glutinosa (Atlantic hagfish).